The sequence spans 946 residues: DDB1- and CUL4-associated factor 5 (946 aa).

WD repeat units follow at residues Gly51–Val91, Glu99–Phe139, Ala140–Pro180, Asn185–Leu225, Phe277–Gly317, and Gly331–Gly370. Residues Gly449–Asp478 form a disordered region. The segment covering Ser454–Leu465 has biased composition (polar residues). Residue Thr500 is modified to Phosphothreonine. Disordered regions lie at residues Leu527–Val656, Ser675–Thr860, and Cys894–Thr946. A phosphoserine mark is found at Ser531 and Ser533. Residues Ser531 to Thr544 are compositionally biased toward acidic residues. Residues Pro555–Ser567 are compositionally biased toward low complexity. Over residues Ala579 to Lys592 the composition is skewed to basic residues. Residues Leu625 to Ser638 show a composition bias toward low complexity. Residues Ser626, Ser628, and Ser645 each carry the phosphoserine modification. Positions Glu691–Asn701 are enriched in basic and acidic residues. 2 stretches are compositionally biased toward polar residues: residues Gly760 to Gly769 and Thr808 to Thr819.

In terms of assembly, interacts with DDB1, CUL4A or CUL4B. Interacts with L3MBTL3. Interacts with SOX2. Interacts with DNMT1. Interacts with E2F1.

Its pathway is protein modification; protein ubiquitination. Functionally, is a substrate receptor for the CUL4-DDB1 E3 ubiquitin-protein ligase complex (CRL4), involved in the ubiquitination of a set of methylated non-histone proteins, including SOX2. The complex CRL4-DCAF5 is also involved in the ubiquitination of methylated DNMT1 and E2F1. The chain is DDB1- and CUL4-associated factor 5 (Dcaf5) from Mus musculus (Mouse).